Consider the following 129-residue polypeptide: Allergen Bra j 1-E (129 aa).

Positions 28 to 47 (KQAMQSGSGPQPQGPQQRPP) are disordered. Over residues 32–47 (QSGSGPQPQGPQQRPP) the composition is skewed to low complexity.

It belongs to the 2S seed storage albumins family. In terms of assembly, the mature protein consists of a small and a large chain linked by two disulfide bonds.

Functionally, this is a 2S seed storage protein. The chain is Allergen Bra j 1-E from Brassica juncea (Indian mustard).